The primary structure comprises 506 residues: D-alanine--D-alanyl carrier protein ligase (506 aa).

Residue 152–153 participates in ATP binding; the sequence is TS. Aspartate 197 serves as a coordination point for D-alanine. 292–297 contributes to the ATP binding site; it reads NTYGPT. D-alanine is bound at residue valine 301. ATP is bound by residues aspartate 383, 395–398, and lysine 494; that span reads YRGR. Lysine 494 contacts D-alanine.

It belongs to the ATP-dependent AMP-binding enzyme family. DltA subfamily.

It is found in the cytoplasm. It catalyses the reaction holo-[D-alanyl-carrier protein] + D-alanine + ATP = D-alanyl-[D-alanyl-carrier protein] + AMP + diphosphate. Its pathway is cell wall biogenesis; lipoteichoic acid biosynthesis. Functionally, catalyzes the first step in the D-alanylation of lipoteichoic acid (LTA), the activation of D-alanine and its transfer onto the D-alanyl carrier protein (Dcp) DltC. In an ATP-dependent two-step reaction, forms a high energy D-alanyl-AMP intermediate, followed by transfer of the D-alanyl residue as a thiol ester to the phosphopantheinyl prosthetic group of the Dcp. D-alanylation of LTA plays an important role in modulating the properties of the cell wall in Gram-positive bacteria, influencing the net charge of the cell wall. This is D-alanine--D-alanyl carrier protein ligase from Lacticaseibacillus rhamnosus (Lactobacillus rhamnosus).